Here is a 438-residue protein sequence, read N- to C-terminus: Adenylosuccinate synthetase (438 aa).

GTP is bound by residues G13–K19 and G41–T43. The active-site Proton acceptor is D14. Mg(2+)-binding residues include D14 and G41. Residues D14–K17, N39–H42, T130, R144, Q225, T240, and R310 each bind IMP. H42 serves as the catalytic Proton donor. A306–R312 lines the substrate pocket. Residues R312, K338–D340, and S421–G423 contribute to the GTP site.

Belongs to the adenylosuccinate synthetase family. As to quaternary structure, homodimer. It depends on Mg(2+) as a cofactor.

The protein resides in the cytoplasm. It catalyses the reaction IMP + L-aspartate + GTP = N(6)-(1,2-dicarboxyethyl)-AMP + GDP + phosphate + 2 H(+). It functions in the pathway purine metabolism; AMP biosynthesis via de novo pathway; AMP from IMP: step 1/2. In terms of biological role, plays an important role in the de novo pathway of purine nucleotide biosynthesis. Catalyzes the first committed step in the biosynthesis of AMP from IMP. The sequence is that of Adenylosuccinate synthetase from Vibrio parahaemolyticus serotype O3:K6 (strain RIMD 2210633).